A 95-amino-acid polypeptide reads, in one-letter code: Large ribosomal subunit protein bL25 (95 aa).

Belongs to the bacterial ribosomal protein bL25 family. As to quaternary structure, part of the 50S ribosomal subunit; part of the 5S rRNA/L5/L18/L25 subcomplex. Contacts the 5S rRNA. Binds to the 5S rRNA independently of L5 and L18.

Its function is as follows. This is one of the proteins that binds to the 5S RNA in the ribosome where it forms part of the central protuberance. This is Large ribosomal subunit protein bL25 from Shewanella baltica (strain OS223).